A 155-amino-acid chain; its full sequence is MSNPIVTSLKILASNTAADKGLEVVELKFNPHSKPITIQVQIQKKPKKDVSLDDCAQFSELISETIELSKLINEPYLLEISSPGLGDLLQTDKDFKTFKGFPIEVLFKNNENTKLTKSGLLHERSKEYLLINIKGRISKIPREDVITVQLTSPTG.

This sequence belongs to the RimP family.

The protein resides in the cytoplasm. In terms of biological role, required for maturation of 30S ribosomal subunits. In Prochlorococcus marinus (strain MIT 9211), this protein is Ribosome maturation factor RimP.